The following is a 256-amino-acid chain: Thiazole synthase (256 aa).

Lys-95 functions as the Schiff-base intermediate with DXP in the catalytic mechanism. Residues Gly-156, 182–183, and 204–205 contribute to the 1-deoxy-D-xylulose 5-phosphate site; these read AG and NT.

Belongs to the ThiG family. In terms of assembly, homotetramer. Forms heterodimers with either ThiH or ThiS.

Its subcellular location is the cytoplasm. It carries out the reaction [ThiS sulfur-carrier protein]-C-terminal-Gly-aminoethanethioate + 2-iminoacetate + 1-deoxy-D-xylulose 5-phosphate = [ThiS sulfur-carrier protein]-C-terminal Gly-Gly + 2-[(2R,5Z)-2-carboxy-4-methylthiazol-5(2H)-ylidene]ethyl phosphate + 2 H2O + H(+). The protein operates within cofactor biosynthesis; thiamine diphosphate biosynthesis. Its function is as follows. Catalyzes the rearrangement of 1-deoxy-D-xylulose 5-phosphate (DXP) to produce the thiazole phosphate moiety of thiamine. Sulfur is provided by the thiocarboxylate moiety of the carrier protein ThiS. In vitro, sulfur can be provided by H(2)S. In Citrobacter koseri (strain ATCC BAA-895 / CDC 4225-83 / SGSC4696), this protein is Thiazole synthase.